The sequence spans 282 residues: Ribonuclease 3 (282 aa).

The RNase III domain maps to 18 to 141 (FVAFFKSLNI…LVAAIYEDLG (124 aa)). Glu-59 lines the Mg(2+) pocket. The active site involves Asp-63. Mg(2+) is bound by residues Asp-127 and Glu-130. Glu-130 is a catalytic residue.

The protein belongs to the ribonuclease III family. Homodimer. Mg(2+) is required as a cofactor.

It localises to the cytoplasm. The enzyme catalyses Endonucleolytic cleavage to 5'-phosphomonoester.. Digests double-stranded RNA. Involved in the processing of primary rRNA transcript to yield the immediate precursors to the large and small rRNAs (23S and 16S). Processes some mRNAs, and tRNAs when they are encoded in the rRNA operon. Processes pre-crRNA and tracrRNA of type II CRISPR loci if present in the organism. This Mycoplasmoides pneumoniae (strain ATCC 15531 / DSM 23978 / CIP 103766 / NBRC 14401 / NCTC 10119 / FH) (Mycoplasma pneumoniae) protein is Ribonuclease 3.